The chain runs to 1035 residues: Potassium-transporting ATPase alpha chain 1 (1035 aa).

The segment at 1 to 41 is disordered; the sequence is MGKADNYELYSVELGPGPGGDMAAKMSKKKKAGGGGGKRKE. The Cytoplasmic segment spans residues 1–98; the sequence is MGKADNYELY…NALRPPRGTP (98 aa). Residues tyrosine 7 and tyrosine 10 each carry the phosphotyrosine modification. A compositionally biased stretch (basic residues) spans 26 to 40; sequence MSKKKKAGGGGGKRK. A Phosphoserine modification is found at serine 27. The helical transmembrane segment at 99–119 threads the bilayer; that stretch reads EYVKFARQLAGGLQCLMWVAA. Residues 120–142 lie on the Lumenal side of the membrane; it reads AICLIAFAIQASEGDLTTDDNLY. Residues 143 to 163 form a helical membrane-spanning segment; the sequence is LALALIAVVVVTGCFGYYQEF. Residues 164–299 lie on the Cytoplasmic side of the membrane; the sequence is KSTNIIASFK…NEKTPIAIEI (136 aa). The helical transmembrane segment at 300 to 319 threads the bilayer; the sequence is EHFVDIIAGLAILFGATFFV. The Lumenal segment spans residues 320–331; sequence VAMCIGYTFLRA. A helical transmembrane segment spans residues 332 to 349; it reads MVFFMAIVVAYVPEGLLA. K(+) contacts are provided by valine 340, alanine 341, valine 343, and glutamate 345. At 350-783 the chain is on the cytoplasmic side; the sequence is TVTVCLSLTA…EQGRLIFDNL (434 aa). Aspartate 387 functions as the 4-aspartylphosphate intermediate in the catalytic mechanism. Mg(2+) contacts are provided by aspartate 387 and threonine 389. A phosphoserine mark is found at serine 463 and serine 601. Mg(2+)-binding residues include aspartate 728 and aspartate 732. A helical membrane pass occupies residues 784-803; the sequence is KKSIAYTLTKNIPELTPYLI. Glutamate 797 contacts K(+). The Lumenal portion of the chain corresponds to 804–813; the sequence is YITVSVPLPL. Residues 814-834 form a helical membrane-spanning segment; the sequence is GCITILFIELCTDIFPSVSLA. Residue glutamate 822 coordinates K(+). Topologically, residues 835 to 854 are cytoplasmic; sequence YEKAESDIMHLRPRNPKRDR. Phosphoserine is present on serine 840. A helical transmembrane segment spans residues 855–877; that stretch reads LVNEPLAAYSYFQIGAIQSFAGF. The Lumenal portion of the chain corresponds to 878–929; the sequence is TDYFTAMAQEGWFPLLCVGLRPQWEDHHLQDLQDSYGQEWTFGQRLYQQYTC. Residues 930 to 949 traverse the membrane as a helical segment; the sequence is YTVFFISIEMCQIADVLIRK. The Cytoplasmic segment spans residues 950–963; the sequence is TRRLSAFQQGFFRN. Position 954 is a phosphoserine; by PKA (serine 954). The chain crosses the membrane as a helical span at residues 964–982; sequence RILVIAIVFQVCIGCFLCY. Residues 983-997 are Lumenal-facing; that stretch reads CPGMPNIFNFMPIRF. A helical transmembrane segment spans residues 998-1018; that stretch reads QWWLVPMPFGLLIFVYDEIRK. Residues 1019–1035 lie on the Cytoplasmic side of the membrane; sequence LGVRCCPGSWWDQELYY.

It belongs to the cation transport ATPase (P-type) (TC 3.A.3) family. Type IIC subfamily. The gastric H(+)/K(+) ATPase pump is composed of the catalytic alpha subunit ATP4A and the regulatory beta subunit ATP4B. Interacts (via the P-domain) with ATP4B (via N-terminus); this interaction stabilizes the lumenal-open E2 conformation state and prevents the reverse reaction of the transport cycle.

The protein resides in the apical cell membrane. It localises to the cell membrane. The catalysed reaction is K(+)(out) + ATP + H2O + H(+)(in) = K(+)(in) + ADP + phosphate + 2 H(+)(out). Its function is as follows. The catalytic subunit of the gastric H(+)/K(+) ATPase pump which transports H(+) ions in exchange for K(+) ions across the apical membrane of parietal cells. Uses ATP as an energy source to pump H(+) ions to the gastric lumen while transporting K(+) ion from the lumen into the cell. Remarkably generates a million-fold proton gradient across the gastric parietal cell membrane, acidifying the gastric juice down to pH 1. Within a transport cycle, the transfer of a H(+) ion across the membrane is coupled to ATP hydrolysis and is associated with a transient phosphorylation that shifts the pump conformation from inward-facing (E1) to outward-facing state (E2). The release of the H(+) ion in the stomach lumen is followed by binding of K(+) ion converting the pump conformation back to the E1 state. The polypeptide is Potassium-transporting ATPase alpha chain 1 (ATP4A) (Oryctolagus cuniculus (Rabbit)).